We begin with the raw amino-acid sequence, 187 residues long: UPF0301 protein VS_2679 (187 aa).

This sequence belongs to the UPF0301 (AlgH) family.

In Vibrio atlanticus (strain LGP32) (Vibrio splendidus (strain Mel32)), this protein is UPF0301 protein VS_2679.